The sequence spans 830 residues: MPGHSRSRDRLSPSSELDDADPVYSPSVYQREHYYNNDSLFDSADDDYTRTPRNVYSYETHDEYHDDDDDDDDVHEHDHDHEYDDKFEEPWVPLRAQVEGDQWREGFETAIPKEEDVTQAKEYQYQMSGALGDDGPPPLPSDALGRGKGKKRLDRETRRQRRKERLAAFFKHKNGSASAGLVSGDALAKLLGSQDGDEDCLSHLGTERADSMSQKNLEGGRQRKLPVLSEEPMMLRPFPAVAPTGQTQGRVVSGAQLEEGGPGMEMRHRGGGGPPAEGLLQKEGDWDGSTKGSSTSARPSFWKRYHKTFIFFAILIVLAAIAIPVGIIEARRLHGTSGGDNSSNSNLKGISRDSIPAYARGTYLDPFTWYDTTDFNVTFTNATVGGLSIMGLNSTWNDSAQANENVPPLNEKFPYGSQPIRGVNLGGWLSIEPFIVPSLFDTYTSSEGIIDEWTLSEKLGDSAASVIEKHYATFITEQDFADIRDAGLDHVRIQFSYWAIKTYDGDPYVPKIAWRYLLRAIEYCRKYGLRVNLDPHGIPGSQNGWNHSGRQGTIGWLNGTDGELNRQRSLEMHDQLSQFFAQDRYKNVVTIYGLVNEPLMLSLPVEKVLNWTTEATNLVQKNGIKAWVTVHDGFLNLDKWDKMLKTRPSNMMLDTHQYTVFNTGEIVLNHTRRVELICESWYSMIQQINITSTGWGPTICGEWSQADTDCAQYVNNVGRGTRWEGTFSLTDSTQYCPTASEGTCSCTQANAVPGVYSEGYKTFLQTYAEAQMSAFESAMGWFYWTWATESAAQWSYRTAWKNGYMPKKAYSPSFKCGDTIPSFGNLPEYY.

Composition is skewed to basic and acidic residues over residues 1 to 11 (MPGHSRSRDRL) and 74 to 84 (VHEHDHDHEYD). Disordered regions lie at residues 1 to 91 (MPGH…EEPW), 127 to 163 (MSGA…QRRK), and 260 to 297 (GGPG…STSA). Residues 1–307 (MPGHSRSRDR…RPSFWKRYHK (307 aa)) are Cytoplasmic-facing. A compositionally biased stretch (basic residues) spans 147 to 163 (GKGKKRLDRETRRQRRK). The helical; Signal-anchor for type II membrane protein transmembrane segment at 308–328 (TFIFFAILIVLAAIAIPVGII) threads the bilayer. Topologically, residues 329 to 830 (EARRLHGTSG…PSFGNLPEYY (502 aa)) are extracellular. Residues N341, N376, N381, N393, N397, N546, and N558 are each glycosylated (N-linked (GlcNAc...) asparagine). The active-site Proton donor is the E597. N610, N669, and N689 each carry an N-linked (GlcNAc...) asparagine glycan. The active-site Nucleophile is E702.

It belongs to the glycosyl hydrolase 5 (cellulase A) family.

The protein resides in the cell membrane. It catalyses the reaction Successive hydrolysis of beta-D-glucose units from the non-reducing ends of (1-&gt;3)-beta-D-glucans, releasing alpha-glucose.. In terms of biological role, glucosidase involved in the degradation of cellulosic biomass. Active on lichenan. This is Probable glucan 1,3-beta-glucosidase D (exgD) from Aspergillus niger (strain ATCC MYA-4892 / CBS 513.88 / FGSC A1513).